The following is a 205-amino-acid chain: Large ribosomal subunit protein uL18 (205 aa).

It belongs to the universal ribosomal protein uL18 family. As to quaternary structure, part of the 50S ribosomal subunit. Contacts the 5S and 23S rRNAs.

In terms of biological role, this is one of the proteins that bind and probably mediate the attachment of the 5S RNA into the large ribosomal subunit, where it forms part of the central protuberance. The protein is Large ribosomal subunit protein uL18 of Pyrobaculum arsenaticum (strain DSM 13514 / JCM 11321 / PZ6).